Here is a 206-residue protein sequence, read N- to C-terminus: Ras-related protein Rab-18 (206 aa).

M1 is subject to N-acetylmethionine. S17, G20, K21, S22, S23, D34, P35, T40, G66, K123, and D125 together coordinate GTP. Residue S22 coordinates Mg(2+). Short sequence motifs (switch) lie at residues 31–45 and 63–80; these read DTFDPELAATIGVDF and DTAGQERFRTLTPSYYRG. T40 provides a ligand contact to Mg(2+). The residue at position 144 (S144) is a Phosphoserine. A152 contacts GTP. A lipid anchor (S-palmitoyl cysteine) is attached at C199. C203 carries the cysteine methyl ester modification. C203 carries the S-geranylgeranyl cysteine lipid modification. A propeptide spans 204-206 (removed in mature form); sequence SVL.

The protein belongs to the small GTPase superfamily. Rab family. As to quaternary structure, interacts (in GTP-bound form) with ZFYVE1. Interacts with ZW10 and this interaction is enhanced in the presence of ZFYVE1. Interacts with BSCL2. Requires Mg(2+) as cofactor.

The protein resides in the endoplasmic reticulum membrane. Its subcellular location is the golgi apparatus. It localises to the cis-Golgi network membrane. The protein localises to the lipid droplet. It is found in the apical cell membrane. It carries out the reaction GTP + H2O = GDP + phosphate + H(+). Regulated by guanine nucleotide exchange factors (GEFs) which promote the exchange of bound GDP for free GTP. Regulated by GTPase activating proteins (GAPs) which increase the GTP hydrolysis activity at the ER membrane. Inhibited by GDP dissociation inhibitors (GDIs) which prevent Rab-GDP dissociation. The small GTPases Rab are key regulators of intracellular membrane trafficking, from the formation of transport vesicles to their fusion with membranes. Rabs cycle between an inactive GDP-bound form and an active GTP-bound form that is able to recruit to membranes different sets of downstream effectors directly responsible for vesicle formation, movement, tethering and fusion. RAB18 is required for the localization of ZFYVE1 to lipid droplets and for its function in mediating the formation of endoplasmic reticulum-lipid droplets (ER-LD) contacts. Also required for maintaining endoplasmic reticulum structure. Plays a role in apical endocytosis/recycling. Plays a key role in eye and brain development and neurodegeneration. This chain is Ras-related protein Rab-18 (RAB18), found in Bos taurus (Bovine).